Here is a 435-residue protein sequence, read N- to C-terminus: tRNA modification GTPase MnmE (435 aa).

(6S)-5-formyl-5,6,7,8-tetrahydrofolate is bound by residues Arg24, Glu85, and Arg124. The TrmE-type G domain occupies 220 to 361 (GLVFTIVGAP…LRTALAERAR (142 aa)). Residue Asn230 participates in K(+) binding. Residues 230–235 (NVGKSS), 249–255 (SAIAGTT), and 274–277 (DTAG) contribute to the GTP site. Ser234 is a Mg(2+) binding site. The K(+) site is built by Ser249, Ile251, and Thr254. Thr255 contributes to the Mg(2+) binding site. (6S)-5-formyl-5,6,7,8-tetrahydrofolate is bound at residue Lys435.

This sequence belongs to the TRAFAC class TrmE-Era-EngA-EngB-Septin-like GTPase superfamily. TrmE GTPase family. Homodimer. Heterotetramer of two MnmE and two MnmG subunits. K(+) is required as a cofactor.

The protein resides in the cytoplasm. In terms of biological role, exhibits a very high intrinsic GTPase hydrolysis rate. Involved in the addition of a carboxymethylaminomethyl (cmnm) group at the wobble position (U34) of certain tRNAs, forming tRNA-cmnm(5)s(2)U34. The polypeptide is tRNA modification GTPase MnmE (Gluconacetobacter diazotrophicus (strain ATCC 49037 / DSM 5601 / CCUG 37298 / CIP 103539 / LMG 7603 / PAl5)).